A 295-amino-acid chain; its full sequence is MPSEKDRAKKNLVQRLALKSCLAKETLSEFLGTFIMIVLGCGSIAQAVLSREKAGGIITINIGFATAVVMALYATFGVSGGHINPAVSFAMCTFGRMEWFKFPFYVGAQLLGAFVGAATVFGIYYDGLMAFADGKLLITGENGTAFIFATYPKPFVSVPGAFVDQVVSTMFLLLIVFAIFDSRNLGVPRGLEPIVIGLLIIVISCSLGLNSGCAMNPARDLSPRLFTALAGWGFEVFTFGNNFWWIPVVGPMIGAVLGGLIYVLFIQMHHSNPDPEVKAEPAENNLEKHELSVIM.

Topologically, residues 1–24 (MPSEKDRAKKNLVQRLALKSCLAK) are cytoplasmic. Residues 25-43 (ETLSEFLGTFIMIVLGCGS) traverse the membrane as a helical segment. Topologically, residues 44–57 (IAQAVLSREKAGGI) are extracellular. A helical transmembrane segment spans residues 58-77 (ITINIGFATAVVMALYATFG). At 78 to 79 (VS) the chain is on the cytoplasmic side. Residues 80–92 (GGHINPAVSFAMC) constitute an intramembrane region (discontinuously helical). An NPA 1 motif is present at residues 84 to 86 (NPA). At 93–98 (TFGRME) the chain is on the cytoplasmic side. Residues 99-123 (WFKFPFYVGAQLLGAFVGAATVFGI) traverse the membrane as a helical segment. Topologically, residues 124-160 (YYDGLMAFADGKLLITGENGTAFIFATYPKPFVSVPG) are extracellular. The helical transmembrane segment at 161-178 (AFVDQVVSTMFLLLIVFA) threads the bilayer. At 179-190 (IFDSRNLGVPRG) the chain is on the cytoplasmic side. The helical transmembrane segment at 191-207 (LEPIVIGLLIIVISCSL) threads the bilayer. The Extracellular segment spans residues 208 to 210 (GLN). The segment at residues 211–225 (SGCAMNPARDLSPRL) is an intramembrane region (discontinuously helical). The short motif at 216 to 218 (NPA) is the NPA 2 element. The Extracellular segment spans residues 226-243 (FTALAGWGFEVFTFGNNF). A helical transmembrane segment spans residues 244–264 (WWIPVVGPMIGAVLGGLIYVL). Residues 265-295 (FIQMHHSNPDPEVKAEPAENNLEKHELSVIM) are Cytoplasmic-facing.

Belongs to the MIP/aquaporin (TC 1.A.8) family. Homotetramer; each monomer provides an independent glycerol/water pore.

The protein resides in the cell membrane. The protein localises to the basolateral cell membrane. The enzyme catalyses glycerol(in) = glycerol(out). It catalyses the reaction H2O(in) = H2O(out). The catalysed reaction is urea(in) = urea(out). It carries out the reaction (S)-lactate(in) = (S)-lactate(out). The enzyme catalyses NH4(+)(in) = NH4(+)(out). It catalyses the reaction uracil(in) = uracil(out). The catalysed reaction is adenine(out) = adenine(in). It carries out the reaction 3-hydroxybutanoate(in) = 3-hydroxybutanoate(out). The enzyme catalyses D-sorbitol(in) = D-sorbitol(out). It catalyses the reaction D-mannitol(in) = D-mannitol(out). The catalysed reaction is H2O2(out) = H2O2(in). It carries out the reaction arsenite(in) = arsenite(out). The enzyme catalyses selenite(in) = selenite(out). Aquaglyceroporins form homotetrameric transmembrane channels, with each monomer independently mediating glycerol and water transport across the plasma membrane along their osmotic gradient. AQP9 is the primary route for glycerol uptake in hepatocytes, supporting hepatic gluconeogenesis. It exhibits broad specificity and may transport various small, non-charged solutes, including carbamides, polyols, purines, and pyrimidines. AQP9 may also facilitate hepatic urea extrusion. Due to its permeability to lactate, AQP9 might participate in the astrocyte-to-neuron lactate shuttle, supplying neurons with energy. Additionally, AQP9 is permeable to arsenite, contributing to arsenic excretion by the liver and providing partial protection against arsenic toxicity. It is also permeable to H2O2 in vivo. Could also be permeable to ammonium. The chain is Aquaporin-9 from Mus musculus (Mouse).